A 396-amino-acid polypeptide reads, in one-letter code: CCA-adding enzyme (396 aa).

Positions 32 and 35 each coordinate ATP. Residues G32 and R35 each contribute to the CTP site. Mg(2+)-binding residues include D45 and D47. ATP-binding residues include R116, D159, R162, R165, and R168. CTP-binding residues include R116, D159, R162, R165, and R168.

Belongs to the tRNA nucleotidyltransferase/poly(A) polymerase family. Bacterial CCA-adding enzyme type 3 subfamily. In terms of assembly, homodimer. Mg(2+) is required as a cofactor.

It catalyses the reaction a tRNA precursor + 2 CTP + ATP = a tRNA with a 3' CCA end + 3 diphosphate. The enzyme catalyses a tRNA with a 3' CCA end + 2 CTP + ATP = a tRNA with a 3' CCACCA end + 3 diphosphate. Catalyzes the addition and repair of the essential 3'-terminal CCA sequence in tRNAs without using a nucleic acid template. Adds these three nucleotides in the order of C, C, and A to the tRNA nucleotide-73, using CTP and ATP as substrates and producing inorganic pyrophosphate. tRNA 3'-terminal CCA addition is required both for tRNA processing and repair. Also involved in tRNA surveillance by mediating tandem CCA addition to generate a CCACCA at the 3' terminus of unstable tRNAs. While stable tRNAs receive only 3'-terminal CCA, unstable tRNAs are marked with CCACCA and rapidly degraded. The protein is CCA-adding enzyme of Lactobacillus delbrueckii subsp. bulgaricus (strain ATCC BAA-365 / Lb-18).